The chain runs to 584 residues: Isocitrate dehydrogenase kinase/phosphatase (584 aa).

ATP contacts are provided by residues 315-321 and lysine 336; that span reads APGVKGM. Residue aspartate 371 is part of the active site.

The protein belongs to the AceK family.

The protein localises to the cytoplasm. The catalysed reaction is L-seryl-[isocitrate dehydrogenase] + ATP = O-phospho-L-seryl-[isocitrate dehydrogenase] + ADP + H(+). Its function is as follows. Bifunctional enzyme which can phosphorylate or dephosphorylate isocitrate dehydrogenase (IDH) on a specific serine residue. This is a regulatory mechanism which enables bacteria to bypass the Krebs cycle via the glyoxylate shunt in response to the source of carbon. When bacteria are grown on glucose, IDH is fully active and unphosphorylated, but when grown on acetate or ethanol, the activity of IDH declines drastically concomitant with its phosphorylation. This Serratia proteamaculans (strain 568) protein is Isocitrate dehydrogenase kinase/phosphatase.